The chain runs to 242 residues: Myb-related protein MYBAS2 (242 aa).

HTH myb-type domains follow at residues 5 to 61 (REEI…HPGL) and 62 to 112 (KRGR…RKKA). The H-T-H motif DNA-binding region spans 33 to 57 (WDFIAKVSGLNRTGKSCRLRWVNYL). Residues 62–65 (KRGR) carry the Bipartite nuclear localization signal 1 motif. Residues 85 to 108 (WSRIARRLPGRTDNEIKNYWRTHM) constitute a DNA-binding region (H-T-H motif). The short motif at 109–117 (RKKAQERKS) is the Bipartite nuclear localization signal 2 element. The segment at 110–133 (KKAQERKSNMSPSSSSSSLTYQSC) is disordered. The span at 118–133 (NMSPSSSSSSLTYQSC) shows a compositional bias: low complexity.

It is found in the nucleus. Its function is as follows. Transcription factor. The chain is Myb-related protein MYBAS2 (MYBAS2) from Oryza sativa subsp. japonica (Rice).